We begin with the raw amino-acid sequence, 336 residues long: 3-hydroxyisobutyrate dehydrogenase, mitochondrial (336 aa).

A mitochondrion-targeting transit peptide spans 1–36 (MAASLRLLGAASGLRYWSRRLRPAAGSFAAVCSRSV). 40–69 (TPVGFIGLGNMGNPMAKNLMKHGYPLIIYD) provides a ligand contact to NAD(+). N6-acetyllysine; alternate occurs at positions 60 and 76. N6-succinyllysine; alternate is present on residues K60 and K76. The residue at position 95 (K95) is an N6-succinyllysine. NAD(+) is bound by residues 103–104 (LP) and N108. N6-acetyllysine is present on K121. T134 contacts NAD(+). Position 141 is an N6-succinyllysine (K141). Position 145 is an N6-acetyllysine (K145). Position 149 is an N6-acetyllysine; alternate (K149). An N6-succinyllysine; alternate modification is found at K149. K209 is a catalytic residue. Residues K238 and K242 each carry the N6-acetyllysine; alternate modification. N6-succinyllysine; alternate occurs at positions 238 and 242. K284 lines the NAD(+) pocket. K297 is subject to N6-succinyllysine. The residue at position 321 (K321) is an N6-acetyllysine; alternate. An N6-succinyllysine; alternate modification is found at K321.

It belongs to the HIBADH-related family. 3-hydroxyisobutyrate dehydrogenase subfamily. Homodimer.

It is found in the mitochondrion. The enzyme catalyses 3-hydroxy-2-methylpropanoate + NAD(+) = 2-methyl-3-oxopropanoate + NADH + H(+). The protein operates within amino-acid degradation; L-valine degradation. The chain is 3-hydroxyisobutyrate dehydrogenase, mitochondrial (HIBADH) from Pongo abelii (Sumatran orangutan).